Consider the following 315-residue polypeptide: Transaldolase (315 aa).

The Schiff-base intermediate with substrate role is filled by lysine 131.

This sequence belongs to the transaldolase family. Type 1 subfamily. In terms of assembly, homodimer.

It is found in the cytoplasm. The catalysed reaction is D-sedoheptulose 7-phosphate + D-glyceraldehyde 3-phosphate = D-erythrose 4-phosphate + beta-D-fructose 6-phosphate. The protein operates within carbohydrate degradation; pentose phosphate pathway; D-glyceraldehyde 3-phosphate and beta-D-fructose 6-phosphate from D-ribose 5-phosphate and D-xylulose 5-phosphate (non-oxidative stage): step 2/3. In terms of biological role, transaldolase is important for the balance of metabolites in the pentose-phosphate pathway. This is Transaldolase from Actinobacillus pleuropneumoniae serotype 3 (strain JL03).